Consider the following 247-residue polypeptide: UPF0309 protein Lm4b_02611 (247 aa).

Positions 31–214 (VAESIENDGV…ETMVNDNFTP (184 aa)) constitute an SIS domain.

It belongs to the UPF0309 family.

This is UPF0309 protein Lm4b_02611 from Listeria monocytogenes serotype 4b (strain CLIP80459).